Consider the following 582-residue polypeptide: Choline kinase (582 aa).

Positions 1 to 36 are disordered; the sequence is MVQESRPGSVRSYSVGYQARSRSSSQRRHSLTRQRS. Serine 30 bears the Phosphoserine; by PKA mark. Residues serine 48 and serine 51 each carry the phosphoserine modification. Phosphothreonine is present on threonine 54. A Phosphoserine; by PKA modification is found at serine 85.

Belongs to the choline/ethanolamine kinase family. In terms of assembly, monomer. Interacts with NAP1. Requires Mg(2+) as cofactor.

It localises to the cytoplasm. It catalyses the reaction choline + ATP = phosphocholine + ADP + H(+). It carries out the reaction ethanolamine + ATP = phosphoethanolamine + ADP + H(+). The protein operates within phospholipid metabolism; phosphatidylcholine biosynthesis; phosphocholine from choline: step 1/1. Functionally, catalyzes the committed step in the synthesis of phosphatidylcholine by the CDP-choline pathway. Also exhibits ethanolamine kinase activity but it is a poor substrate at 14% efficiency compared with choline. This chain is Choline kinase, found in Saccharomyces cerevisiae (strain ATCC 204508 / S288c) (Baker's yeast).